The sequence spans 360 residues: Probable CCR4-associated factor 1 homolog 1 (360 aa).

Positions 37, 39, 155, and 226 each coordinate a divalent metal cation.

Belongs to the CAF1 family. In terms of assembly, component of the CCR4-NOT complex, at least composed of CRR4 and CAF1 proteins. A divalent metal cation is required as a cofactor.

It localises to the nucleus. The protein localises to the cytoplasm. It catalyses the reaction Exonucleolytic cleavage of poly(A) to 5'-AMP.. Its function is as follows. Ubiquitous transcription factor required for a diverse set of processes. It is a component of the CCR4 complex involved in the control of gene expression. The sequence is that of Probable CCR4-associated factor 1 homolog 1 (CAF1-1) from Arabidopsis thaliana (Mouse-ear cress).